Consider the following 192-residue polypeptide: MEYRSLTLDDFLSRFQLLRPQINREPLNHRQAAVLIPIVRRPQPGLLLTQRSIHLRKHAGQVAFPGGAVDDTDASVIAAALREAEEEVAIPPSAVEVIGVLPPVDSVTGYQVTPVVGIIPPDLPYRASEDEVSAVFEMPLAQALHLGRYHPLDIYRRGDSHRVWLSWYEQYFVWGMTAGIIRELALQIGVTP.

The 132-residue stretch at 29-160 (HRQAAVLIPI…PLDIYRRGDS (132 aa)) folds into the Nudix hydrolase domain. The Nudix box signature appears at 67–89 (GAVDDTDASVIAAALREAEEEVA). Mg(2+) contacts are provided by glutamate 83 and glutamate 87.

It belongs to the Nudix hydrolase family. PCD1 subfamily. Mn(2+) is required as a cofactor. The cofactor is Mg(2+).

Probably mediates the hydrolysis of some nucleoside diphosphate derivatives. This is an uncharacterized protein from Shigella flexneri.